The following is a 705-amino-acid chain: Methionine--tRNA ligase (705 aa).

The 'HIGH' region signature appears at 17–27 (PYANGPVHLGH). Zn(2+)-binding residues include Cys149, Cys152, Cys162, and Cys165. The 'KMSKS' region motif lies at 347–351 (KFSKS). Lys350 provides a ligand contact to ATP. Residues 604–705 (EFQKVDLRVA…GEGINGQSVQ (102 aa)) enclose the tRNA-binding domain.

It belongs to the class-I aminoacyl-tRNA synthetase family. MetG type 1 subfamily. Homodimer. Requires Zn(2+) as cofactor.

It is found in the cytoplasm. It catalyses the reaction tRNA(Met) + L-methionine + ATP = L-methionyl-tRNA(Met) + AMP + diphosphate. In terms of biological role, is required not only for elongation of protein synthesis but also for the initiation of all mRNA translation through initiator tRNA(fMet) aminoacylation. The polypeptide is Methionine--tRNA ligase (Chlorobium chlorochromatii (strain CaD3)).